The primary structure comprises 179 residues: Guanosine-3',5'-bis(diphosphate) 3'-pyrophosphohydrolase MESH1 (179 aa).

G2 is modified (N-acetylglycine). K25 is modified (N6-acetyllysine). The HD domain occupies 32 to 127 (YINHPIGVAR…VKLADKLYNL (96 aa)). 3 residues coordinate Mn(2+): H35, H61, and D62. Residues E65 and D66 each act as nucleophile in the active site. The residue at position 97 (K97) is an N6-acetyllysine. D122 provides a ligand contact to Mn(2+). N6-acetyllysine is present on K123.

This sequence belongs to the MESH1 family. The cofactor is Mn(2+).

The catalysed reaction is guanosine 3',5'-bis(diphosphate) + H2O = GDP + diphosphate + H(+). In terms of biological role, ppGpp hydrolyzing enzyme involved in starvation response. In Mus musculus (Mouse), this protein is Guanosine-3',5'-bis(diphosphate) 3'-pyrophosphohydrolase MESH1 (Hddc3).